The sequence spans 395 residues: S-adenosylmethionine synthase (395 aa).

His16 contacts ATP. Asp18 serves as a coordination point for Mg(2+). Glu44 provides a ligand contact to K(+). 2 residues coordinate L-methionine: Glu57 and Gln100. The segment at 100–110 is flexible loop; that stretch reads QSPDIAGGVNL. ATP contacts are provided by residues 175 to 177, 242 to 243, Asp251, 257 to 258, Ala274, and Lys278; these read DGK, RF, and RK. Asp251 serves as a coordination point for L-methionine. Residue Lys282 coordinates L-methionine.

It belongs to the AdoMet synthase family. In terms of assembly, homotetramer; dimer of dimers. The cofactor is Mg(2+). K(+) is required as a cofactor.

It is found in the cytoplasm. The catalysed reaction is L-methionine + ATP + H2O = S-adenosyl-L-methionine + phosphate + diphosphate. Its pathway is amino-acid biosynthesis; S-adenosyl-L-methionine biosynthesis; S-adenosyl-L-methionine from L-methionine: step 1/1. Its function is as follows. Catalyzes the formation of S-adenosylmethionine (AdoMet) from methionine and ATP. The overall synthetic reaction is composed of two sequential steps, AdoMet formation and the subsequent tripolyphosphate hydrolysis which occurs prior to release of AdoMet from the enzyme. The chain is S-adenosylmethionine synthase from Thermus thermophilus (strain ATCC BAA-163 / DSM 7039 / HB27).